The following is a 497-amino-acid chain: ATP synthase subunit alpha, chloroplastic (497 aa).

170–177 (GDRQTGKT) is an ATP binding site.

This sequence belongs to the ATPase alpha/beta chains family. In terms of assembly, F-type ATPases have 2 components, CF(1) - the catalytic core - and CF(0) - the membrane proton channel. CF(1) has five subunits: alpha(3), beta(3), gamma(1), delta(1), epsilon(1). CF(0) has four main subunits: a, b, b' and c.

It localises to the plastid. The protein localises to the chloroplast thylakoid membrane. The catalysed reaction is ATP + H2O + 4 H(+)(in) = ADP + phosphate + 5 H(+)(out). Its function is as follows. Produces ATP from ADP in the presence of a proton gradient across the membrane. The alpha chain is a regulatory subunit. This Bigelowiella natans (Pedinomonas minutissima) protein is ATP synthase subunit alpha, chloroplastic.